The sequence spans 339 residues: tRNA N6-adenosine threonylcarbamoyltransferase (339 aa).

Residues His-114 and His-118 each coordinate Fe cation. Residues 137-141 (VVSGG), Asp-170, Gly-183, Asp-187, and Asn-277 contribute to the substrate site. Residue Asp-305 coordinates Fe cation.

Belongs to the KAE1 / TsaD family. Requires Fe(2+) as cofactor.

It is found in the cytoplasm. The enzyme catalyses L-threonylcarbamoyladenylate + adenosine(37) in tRNA = N(6)-L-threonylcarbamoyladenosine(37) in tRNA + AMP + H(+). Its function is as follows. Required for the formation of a threonylcarbamoyl group on adenosine at position 37 (t(6)A37) in tRNAs that read codons beginning with adenine. Is involved in the transfer of the threonylcarbamoyl moiety of threonylcarbamoyl-AMP (TC-AMP) to the N6 group of A37, together with TsaE and TsaB. TsaD likely plays a direct catalytic role in this reaction. The protein is tRNA N6-adenosine threonylcarbamoyltransferase of Clostridium beijerinckii (strain ATCC 51743 / NCIMB 8052) (Clostridium acetobutylicum).